A 263-amino-acid chain; its full sequence is NADH dehydrogenase [ubiquinone] iron-sulfur protein 3, mitochondrial (263 aa).

Residues 1 to 35 (MAAAAARVWCRGLLGAASVGRGAGRPSVLWQHVRR) constitute a mitochondrion transit peptide.

This sequence belongs to the complex I 30 kDa subunit family. As to quaternary structure, core subunit of respiratory chain NADH dehydrogenase (Complex I) which is composed of 45 different subunits. Interacts with NDUFAF3. Interacts with RAB5IF. Found in subcomplexes containing subunits NDUFS2, MT-ND1 and NDUFA13.

The protein resides in the mitochondrion inner membrane. It carries out the reaction a ubiquinone + NADH + 5 H(+)(in) = a ubiquinol + NAD(+) + 4 H(+)(out). Functionally, core subunit of the mitochondrial membrane respiratory chain NADH dehydrogenase (Complex I) which catalyzes electron transfer from NADH through the respiratory chain, using ubiquinone as an electron acceptor. Essential for the catalytic activity and assembly of complex I. This Mus musculus (Mouse) protein is NADH dehydrogenase [ubiquinone] iron-sulfur protein 3, mitochondrial (Ndufs3).